Consider the following 353-residue polypeptide: Uroporphyrinogen decarboxylase (353 aa).

Substrate-binding positions include 30–34 (RQAGR), Asp79, Tyr154, Ser209, and His332.

Belongs to the uroporphyrinogen decarboxylase family. In terms of assembly, homodimer.

Its subcellular location is the cytoplasm. The enzyme catalyses uroporphyrinogen III + 4 H(+) = coproporphyrinogen III + 4 CO2. It functions in the pathway porphyrin-containing compound metabolism; protoporphyrin-IX biosynthesis; coproporphyrinogen-III from 5-aminolevulinate: step 4/4. Functionally, catalyzes the decarboxylation of four acetate groups of uroporphyrinogen-III to yield coproporphyrinogen-III. This chain is Uroporphyrinogen decarboxylase, found in Mycolicibacterium smegmatis (strain ATCC 700084 / mc(2)155) (Mycobacterium smegmatis).